Consider the following 238-residue polypeptide: Lactate utilization protein A (238 aa).

This sequence belongs to the LutA/YkgE family.

Is involved in L-lactate degradation and allows cells to grow with lactate as the sole carbon source. In Anoxybacillus flavithermus (strain DSM 21510 / WK1), this protein is Lactate utilization protein A.